We begin with the raw amino-acid sequence, 780 residues long: GATOR2 complex protein WDR24 (780 aa).

WD repeat units follow at residues 67 to 107 (SLNF…RNKQ), 113 to 153 (EHKR…SVST), 156 to 196 (GQSE…RCER), 200 to 240 (AHNG…AKEI), 244 to 286 (QTIA…IPFA), and 290 to 333 (EHKD…IDRA). The segment at 708–730 (NCSNCKRPMSNKGWICDRCRQCA) adopts a C4-type zinc-finger fold. 15 residues coordinate Zn(2+): C709, C712, C723, C726, C733, C736, C747, C750, H752, H755, H758, C769, C773, H775, and C777. An RING-type; atypical zinc finger spans residues 731–780 (SMCAVCHHVVKGLFVWCQGCCHGGHLQHIMNWMQNNCYCPAGCGHVCEYS).

Belongs to the WD repeat WDR24 family. In terms of assembly, component of the GATOR2 subcomplex, composed of MIOS, SEC13, SEH1L, WDR24 and WDR59. The GATOR2 complex interacts with CASTOR1 and CASTOR2; the interaction is negatively regulated by arginine. The GATOR2 complex interacts with SESN1, SESN2 and SESN3; the interaction is negatively regulated by amino acids.

It is found in the lysosome membrane. The enzyme catalyses S-ubiquitinyl-[E2 ubiquitin-conjugating enzyme]-L-cysteine + [acceptor protein]-L-lysine = [E2 ubiquitin-conjugating enzyme]-L-cysteine + N(6)-ubiquitinyl-[acceptor protein]-L-lysine.. It participates in protein modification; protein ubiquitination. The GATOR2 complex is negatively regulated by the upstream amino acid sensors CASTOR1 and SESN2, which sequester the GATOR2 complex in absence of amino acids. In the presence of abundant amino acids, GATOR2 is released from CASTOR1 and SESN2 and activated. Functionally, catalytic component of the GATOR2 complex, a multiprotein complex that acts as an activator of the amino acid-sensing branch of the mTORC1 signaling pathway. The GATOR2 complex indirectly activates mTORC1 through the inhibition of the GATOR1 subcomplex. GATOR2 probably acts as an E3 ubiquitin-protein ligase toward GATOR1. In the presence of abundant amino acids, the GATOR2 complex mediates ubiquitination of the NPRL2 core component of the GATOR1 complex, leading to GATOR1 inactivation. In the absence of amino acids, GATOR2 is inhibited, activating the GATOR1 complex. In addition to its role in regulation of the mTORC1 complex, promotes the acidification of lysosomes and facilitates autophagic flux. Within the GATOR2 complex, WDR24 constitutes the catalytic subunit that mediates 'Lys-6'-linked ubiquitination of NPRL2. The chain is GATOR2 complex protein WDR24 from Xenopus laevis (African clawed frog).